We begin with the raw amino-acid sequence, 428 residues long: Ribulose bisphosphate carboxylase (428 aa).

Lys151 serves as the catalytic Proton acceptor. A substrate-binding site is contributed by Lys153. Mg(2+)-binding residues include Lys177, Asp179, and Glu180. Lys177 bears the N6-carboxylysine mark. Catalysis depends on His270, which acts as the Proton acceptor. Substrate contacts are provided by residues Arg271, His303, 354–356, and 376–379; these read SGG and QFGG.

The protein belongs to the RuBisCO large chain family. Type III subfamily. Homodimer or homodecamer. In contrast to form I RuBisCO, the form III RuBisCO is composed solely of large subunits. Mg(2+) serves as cofactor.

The enzyme catalyses 2 (2R)-3-phosphoglycerate + 2 H(+) = D-ribulose 1,5-bisphosphate + CO2 + H2O. It catalyses the reaction D-ribulose 1,5-bisphosphate + O2 = 2-phosphoglycolate + (2R)-3-phosphoglycerate + 2 H(+). In terms of biological role, catalyzes the addition of molecular CO(2) and H(2)O to ribulose 1,5-bisphosphate (RuBP), generating two molecules of 3-phosphoglycerate (3-PGA). Functions in an archaeal AMP degradation pathway, together with AMP phosphorylase and R15P isomerase. The sequence is that of Ribulose bisphosphate carboxylase from Methanosarcina barkeri (strain Fusaro / DSM 804).